The sequence spans 227 residues: 2-C-methyl-D-erythritol 4-phosphate cytidylyltransferase (227 aa).

The protein belongs to the IspD/TarI cytidylyltransferase family. IspD subfamily.

It catalyses the reaction 2-C-methyl-D-erythritol 4-phosphate + CTP + H(+) = 4-CDP-2-C-methyl-D-erythritol + diphosphate. It participates in isoprenoid biosynthesis; isopentenyl diphosphate biosynthesis via DXP pathway; isopentenyl diphosphate from 1-deoxy-D-xylulose 5-phosphate: step 2/6. Functionally, catalyzes the formation of 4-diphosphocytidyl-2-C-methyl-D-erythritol from CTP and 2-C-methyl-D-erythritol 4-phosphate (MEP). This Tolumonas auensis (strain DSM 9187 / NBRC 110442 / TA 4) protein is 2-C-methyl-D-erythritol 4-phosphate cytidylyltransferase.